The sequence spans 350 residues: Type II restriction enzyme NgoBI (350 aa).

The enzyme catalyses Endonucleolytic cleavage of DNA to give specific double-stranded fragments with terminal 5'-phosphates.. A P subtype restriction enzyme that recognizes the double-stranded sequence 5'-RGCGCY-3'; the cleavage site is unknown. The chain is Type II restriction enzyme NgoBI (ngoBIR) from Neisseria gonorrhoeae.